We begin with the raw amino-acid sequence, 440 residues long: Peroxisome proliferator-activated receptor delta (440 aa).

The disordered stretch occupies residues 1-53; it reads MEQPQEETPEAREEEKEEVAMGDGAPELNGGPEHTLPSSSCADLSQNSSPSSL. Residues 36–53 show a composition bias toward polar residues; that stretch reads LPSSSCADLSQNSSPSSL. A DNA-binding region (nuclear receptor) is located at residues 70 to 144; sequence NMECRVCGDK…LGMSHNAIRF (75 aa). NR C4-type zinc fingers lie at residues 73-93 and 110-132; these read CRVCGDKASGFHYGVHACEGC and CDRICKIQKKNRNKCQYCRFQKC. The NR LBD domain maps to 210–438; sequence FVIHDIETLW…HPLLQEIYKD (229 aa).

This sequence belongs to the nuclear hormone receptor family. NR1 subfamily. In terms of assembly, heterodimer with the retinoid X receptor. Interacts (via domain NR LBD) with CRY1 and CRY2 in a ligand-dependent manner. Post-translationally, 'Lys-48'-linked polyubiquitinated; leading to proteasomal degradation. Deubiquitinated and stabilized by OTUD3. As to expression, heart, adrenal and intestine.

It localises to the nucleus. In terms of biological role, ligand-activated transcription factor key mediator of energy metabolism in adipose tissues. Receptor that binds peroxisome proliferators such as hypolipidemic drugs and fatty acids. Has a preference for poly-unsaturated fatty acids, such as gamma-linoleic acid and eicosapentanoic acid. Once activated by a ligand, the receptor binds to promoter elements of target genes. Regulates the peroxisomal beta-oxidation pathway of fatty acids. Functions as transcription activator for the acyl-CoA oxidase gene. Decreases expression of NPC1L1 once activated by a ligand. The chain is Peroxisome proliferator-activated receptor delta (Ppard) from Mus musculus (Mouse).